Consider the following 500-residue polypeptide: MAHIWLLPLIFLVCILLAVFNHKKHPKYRQFPCPPGFPIIGNLHQIGELPHQTLWKLSKKYGPVMHLMLGRVPTVVVSSSDTARQVLRVHDLHCCTRPSLSGPRELSYNYLDIAFSPYDDYWKEVRKLCVQELFSTKQVHSIQPIKDEEVKKMIDSIAESASQKNPVNLNNKCLELTVSVVCRTAFGVSFEGTVLNSDRFNKIVREALEMLGSFSAADFIPYVGWIIDVLTGLQGRRERSKRDLNAFFEQMFDLHKEGKKEGNEDFVDLLLRLEKEEAVLGNDKLTRNHIKAILLDVLLAGIDTSAITMTWAMTELARNPRVMKKVQSEIRTQMGNRSMISFEDMDQLEYLKMVIKETWRLHPTTPLLLPREAMSEFDINGYTIPVKTRLHVNVWAIGRDPDTWKDPEVFLPERFMDNNIDAKGQHFELLPFGGGRRICPAIYMGTTMVEFGLANLLYHFDWKLPEGVEVKDIDVEEAPGLTVNKKNELLLVPEMRRSCG.

Residues 1 to 21 (MAHIWLLPLIFLVCILLAVFN) traverse the membrane as a helical segment. Cys439 contributes to the heme binding site.

It belongs to the cytochrome P450 family. The cofactor is heme.

It is found in the membrane. This is Cytochrome P450 71B35 (CYP71B35) from Arabidopsis thaliana (Mouse-ear cress).